A 103-amino-acid polypeptide reads, in one-letter code: G0/G1 switch protein 2 (103 aa).

The segment at 80–103 (LQEKGKQQDTVLGGRALSNRQHAS) is disordered.

Directly interacts with BCL2; this interaction prevents the formation of the anti-apoptotic BAX-BCL2 complex. Widely expressed with highest levels in peripheral blood, skeletal muscle and heart, followed by kidney and liver.

It is found in the mitochondrion. Promotes apoptosis by binding to BCL2, hence preventing the formation of protective BCL2-BAX heterodimers. The sequence is that of G0/G1 switch protein 2 (G0S2) from Homo sapiens (Human).